Here is a 343-residue protein sequence, read N- to C-terminus: Protein RecA (343 aa).

ATP is bound at residue 65–72; it reads GPESSGKT.

This sequence belongs to the RecA family.

It localises to the cytoplasm. Its function is as follows. Can catalyze the hydrolysis of ATP in the presence of single-stranded DNA, the ATP-dependent uptake of single-stranded DNA by duplex DNA, and the ATP-dependent hybridization of homologous single-stranded DNAs. It interacts with LexA causing its activation and leading to its autocatalytic cleavage. The polypeptide is Protein RecA (Campylobacter jejuni subsp. doylei (strain ATCC BAA-1458 / RM4099 / 269.97)).